The primary structure comprises 416 residues: uncharacterized protein (416 aa).

9 consecutive transmembrane segments (helical) span residues leucine 5–leucine 25, isoleucine 84–valine 104, alanine 128–isoleucine 148, leucine 160–tryptophan 180, valine 192–phenylalanine 212, proline 237–leucine 257, phenylalanine 263–leucine 283, leucine 288–threonine 308, and isoleucine 312–isoleucine 332.

This sequence belongs to the glycosyltransferase 83 family.

Its subcellular location is the cell membrane. This is an uncharacterized protein from Aquifex aeolicus (strain VF5).